The following is a 382-amino-acid chain: MEKEQLPELKYINVNDFNINEKVIGIPVQTNEVAKYMKMFKGLCYNRIKTKCVIPYNSERMILLETPLKEQTQKLIQDNHLKTVETEVPLTIKNFNVNEIMKRYINKNIQLPSSFETVGTLAHMNLKEEQMEFKYIIGEAFLIKNYPRIQTVITKTAEISNEFRTFPLEVIAGIPNTEVTVICHGVKFVLDYAQCYWNTRLETEHIRIINQMKAGEILCDAFAGVGPFAIPAALKGVKVYANDLNPTAVKYMRINAVNNKTTIECDNMDARDYLRKIVLEKHIQPNYILMNLPATAIEFLDCIPELYLQHCMIHCYGFSPLPNAEDLKKKAFELLKGEYPITIREVRDVAPKKVMYCLSIFIESTKHLTSGNNVPEAKKTLN.

S-adenosyl-L-methionine-binding positions include His-205, 243–244, 269–270, and Asn-291; these read DL and DA.

It belongs to the class I-like SAM-binding methyltransferase superfamily. TRM5/TYW2 family. In terms of assembly, monomer.

Its subcellular location is the mitochondrion matrix. The protein localises to the nucleus. The protein resides in the cytoplasm. The enzyme catalyses guanosine(37) in tRNA + S-adenosyl-L-methionine = N(1)-methylguanosine(37) in tRNA + S-adenosyl-L-homocysteine + H(+). Functionally, specifically methylates the N1 position of guanosine-37 in various cytoplasmic and mitochondrial tRNAs. Methylation is not dependent on the nature of the nucleoside 5' of the target nucleoside. This is the first step in the biosynthesis of wybutosine (yW), a modified base adjacent to the anticodon of tRNAs and required for accurate decoding. This chain is tRNA (guanine(37)-N(1))-methyltransferase, found in Entamoeba histolytica (strain ATCC 30459 / HM-1:IMSS / ABRM).